A 298-amino-acid polypeptide reads, in one-letter code: Homoserine kinase (298 aa).

83–93 (PISRGLGSSSS) is a binding site for ATP.

This sequence belongs to the GHMP kinase family. Homoserine kinase subfamily.

It localises to the cytoplasm. It catalyses the reaction L-homoserine + ATP = O-phospho-L-homoserine + ADP + H(+). It functions in the pathway amino-acid biosynthesis; L-threonine biosynthesis; L-threonine from L-aspartate: step 4/5. Functionally, catalyzes the ATP-dependent phosphorylation of L-homoserine to L-homoserine phosphate. This is Homoserine kinase from Clostridium botulinum (strain Alaska E43 / Type E3).